The following is a 180-amino-acid chain: Ribulose bisphosphate carboxylase small subunit, chloroplastic 2 (180 aa).

The N-terminal 54 residues, 1-54, are a transit peptide targeting the chloroplast; that stretch reads MASMMSNAAVVGRTTPAQASMVAPFTGLKSVSAFPVTKKSNDITSIASNGGRVQ.

The protein belongs to the RuBisCO small chain family. As to quaternary structure, heterohexadecamer of 8 large and 8 small subunits.

It is found in the plastid. Its subcellular location is the chloroplast. In terms of biological role, ruBisCO catalyzes two reactions: the carboxylation of D-ribulose 1,5-bisphosphate, the primary event in carbon dioxide fixation, as well as the oxidative fragmentation of the pentose substrate. Both reactions occur simultaneously and in competition at the same active site. Although the small subunit is not catalytic it is essential for maximal activity. This is Ribulose bisphosphate carboxylase small subunit, chloroplastic 2 from Mesembryanthemum crystallinum (Common ice plant).